Consider the following 130-residue polypeptide: Small ribosomal subunit protein uS11 (130 aa).

This sequence belongs to the universal ribosomal protein uS11 family. Part of the 30S ribosomal subunit. Interacts with proteins S7 and S18. Binds to IF-3.

Functionally, located on the platform of the 30S subunit, it bridges several disparate RNA helices of the 16S rRNA. Forms part of the Shine-Dalgarno cleft in the 70S ribosome. The polypeptide is Small ribosomal subunit protein uS11 (Dehalococcoides mccartyi (strain ATCC BAA-2100 / JCM 16839 / KCTC 5957 / BAV1)).